The chain runs to 174 residues: 3-hydroxydecanoyl-[acyl-carrier-protein] dehydratase (174 aa).

The active site involves His-71.

This sequence belongs to the thioester dehydratase family. FabA subfamily. In terms of assembly, homodimer.

It localises to the cytoplasm. The catalysed reaction is a (3R)-hydroxyacyl-[ACP] = a (2E)-enoyl-[ACP] + H2O. It catalyses the reaction (3R)-hydroxydecanoyl-[ACP] = (2E)-decenoyl-[ACP] + H2O. The enzyme catalyses (2E)-decenoyl-[ACP] = (3Z)-decenoyl-[ACP]. The protein operates within lipid metabolism; fatty acid biosynthesis. Functionally, necessary for the introduction of cis unsaturation into fatty acids. Catalyzes the dehydration of (3R)-3-hydroxydecanoyl-ACP to E-(2)-decenoyl-ACP and then its isomerization to Z-(3)-decenoyl-ACP. Can catalyze the dehydratase reaction for beta-hydroxyacyl-ACPs with saturated chain lengths up to 16:0, being most active on intermediate chain length. The protein is 3-hydroxydecanoyl-[acyl-carrier-protein] dehydratase of Nitrobacter winogradskyi (strain ATCC 25391 / DSM 10237 / CIP 104748 / NCIMB 11846 / Nb-255).